The following is a 67-amino-acid chain: Large ribosomal subunit protein uL29 (67 aa).

Belongs to the universal ribosomal protein uL29 family.

In Sorangium cellulosum (strain So ce56) (Polyangium cellulosum (strain So ce56)), this protein is Large ribosomal subunit protein uL29.